Reading from the N-terminus, the 430-residue chain is Trigger factor (430 aa).

The PPIase FKBP-type domain maps to 163–248 (GDIAVIDFEG…LNSLKRKNMP (86 aa)).

Belongs to the FKBP-type PPIase family. Tig subfamily.

It is found in the cytoplasm. It carries out the reaction [protein]-peptidylproline (omega=180) = [protein]-peptidylproline (omega=0). Involved in protein export. Acts as a chaperone by maintaining the newly synthesized protein in an open conformation. Functions as a peptidyl-prolyl cis-trans isomerase. This chain is Trigger factor, found in Brevibacillus brevis (strain 47 / JCM 6285 / NBRC 100599).